The sequence spans 255 residues: uncharacterized protein (255 aa).

A signal peptide spans 1–18 (MRILIILSIILCSLFTKA).

It belongs to the MlaA family.

This is an uncharacterized protein from Rickettsia bellii (strain RML369-C).